The sequence spans 546 residues: MLTPKKWLLGVLVVSGMLGAQKTNAVPRPKLVVGLVVDQMRWDYLYRYYSKYGEGGFKRMLNTGYSLNNVHIDYVPTVTAIGHTSIFTGSVPSIHGIAGNDWYDKELGKSVYCTSDETVQPVGTTSNSVGQHSPRNLWSTTVTDQLGLATNFTSKVVGVSLKDRASILPAGHNPTGAFWFDDTTGKFITSTYYTKELPKWVNDFNNKNVPAQLVANGWNTLLPINQYTESSEDNVEWEGLLGSKKTPTFPYTDLAKDYEAKKGLIRTTPFGNTLTLQMADAAIDGNQMGVDDITDFLTVNLASTDYVGHNFGPNSIEVEDTYLRLDRDLADFFNNLDKKVGKGNYLVFLSADHGAAHSVGFMQAHKMPTGFFVEDMKKEMNAKLKQKFGADNIIAAAMNYQVYFDRKVLADSKLELDDVRDYVMTELKKEPSVLYVLSTDEIWESSIPEPIKSRVINGYNWKRSGDIQIISKDGYLSAYSKKGTTHSVWNSYDSHIPLLFMGWGIKQGESNQPYHMTDIAPTVSSLLKIQFPSGAVGKPITEVIGR.

An N-terminal signal peptide occupies residues 1-25 (MLTPKKWLLGVLVVSGMLGAQKTNA). 2 residues coordinate Zn(2+): Asp38 and Thr79. Residue Thr79 is the Phosphothreonine intermediate of the active site. Substrate is bound by residues Asn100 and 162–164 (KDR). Residues Asp305, His309, Asp352, His353, and His486 each contribute to the Zn(2+) site.

Zn(2+) serves as cofactor.

Its subcellular location is the periplasm. The enzyme catalyses a phosphate monoester + H2O = an alcohol + phosphate. With respect to regulation, strongly inhibited by orthovanadate and EDTA. Also inhibited by inorganic phosphate. Functionally, alkaline phosphatase with broad substrate specificity. Has phosphatase activity towards nucleotide phosphates with a preference for ATP. Active towards a great variety of phosphomonoesters with the exception of 2',3'-cyclic AMP and myo-inositol hexakisphosphate. The polypeptide is Alkaline phosphatase PafA (Elizabethkingia meningoseptica (Chryseobacterium meningosepticum)).